A 94-amino-acid chain; its full sequence is Small ribosomal subunit protein bS6 (94 aa).

This sequence belongs to the bacterial ribosomal protein bS6 family.

Functionally, binds together with bS18 to 16S ribosomal RNA. The polypeptide is Small ribosomal subunit protein bS6 (Clostridium botulinum (strain Hall / ATCC 3502 / NCTC 13319 / Type A)).